A 199-amino-acid chain; its full sequence is Recombination protein RecR (199 aa).

Residues 57–72 (CQSCRTYTEETLCPIC) form a C4-type zinc finger. The Toprim domain occupies 81 to 176 (STICVVETPA…MISRIAHGVP (96 aa)).

The protein belongs to the RecR family.

Functionally, may play a role in DNA repair. It seems to be involved in an RecBC-independent recombinational process of DNA repair. It may act with RecF and RecO. The sequence is that of Recombination protein RecR from Shewanella putrefaciens (strain CN-32 / ATCC BAA-453).